The primary structure comprises 325 residues: Gamma-hemolysin component B (325 aa).

The first 25 residues, 1–25 (MNMNKLVKSSVATSMALLLLSNTAN), serve as a signal peptide directing secretion.

The protein belongs to the aerolysin family. As to quaternary structure, toxicity requires sequential binding and synergistic association of a class S and a class F component which form heterooligomeric complexes. HlgB (class F) associates with either hlgA thus forming an AB toxin or with hlgC thus forming a CB toxin. Interacts with host AMFR.

Functionally, toxin that seems to act by forming pores in the membrane of the cell. Has a hemolytic and a leucotoxic activity. Promotes host AMFR-mediated inflammation by mediating 'Lys-27'-linked ubiquitination of TAB3, TAK1-TAB3 complex formation and phosphorylation of TAK1/MAP3K7. In turn, activates host NF-kappa-B signaling pathway. The polypeptide is Gamma-hemolysin component B (hlgB) (Staphylococcus aureus (strain MRSA252)).